A 342-amino-acid chain; its full sequence is Pyrophosphate--fructose 6-phosphate 1-phosphotransferase (342 aa).

Glycine 10 contributes to the diphosphate binding site. Glutamate 103 provides a ligand contact to Mg(2+). Substrate is bound by residues 126-128 (TID), arginine 163, 170-172 (MGR), glutamate 222, arginine 266, and 272-275 (HVQR). Aspartate 128 (proton acceptor) is an active-site residue.

This sequence belongs to the phosphofructokinase type A (PFKA) family. Mixed-substrate PFK group III subfamily. Homodimer or homotetramer. Requires Mg(2+) as cofactor.

It localises to the cytoplasm. The enzyme catalyses beta-D-fructose 6-phosphate + diphosphate = beta-D-fructose 1,6-bisphosphate + phosphate + H(+). The protein operates within carbohydrate degradation; glycolysis; D-glyceraldehyde 3-phosphate and glycerone phosphate from D-glucose: step 3/4. Non-allosteric. In terms of biological role, catalyzes the phosphorylation of D-fructose 6-phosphate, the first committing step of glycolysis. Uses inorganic phosphate (PPi) as phosphoryl donor instead of ATP like common ATP-dependent phosphofructokinases (ATP-PFKs), which renders the reaction reversible, and can thus function both in glycolysis and gluconeogenesis. Consistently, PPi-PFK can replace the enzymes of both the forward (ATP-PFK) and reverse (fructose-bisphosphatase (FBPase)) reactions. In Streptomyces coelicolor (strain ATCC BAA-471 / A3(2) / M145), this protein is Pyrophosphate--fructose 6-phosphate 1-phosphotransferase.